We begin with the raw amino-acid sequence, 382 residues long: Telomere-binding protein OPG082 (382 aa).

Belongs to the orthopoxvirus OPG082 family.

The protein localises to the virion. Functionally, binds to the hairpin form of the viral telomeric sequence. Might direct genome encapsidation into the virus particle. In Variola virus (isolate Human/India/Ind3/1967) (VARV), this protein is Telomere-binding protein OPG082 (OPG082).